Here is a 542-residue protein sequence, read N- to C-terminus: Propane 2-monooxygenase, hydroxylase component large subunit (542 aa).

Glu97, Glu127, His130, Glu192, Glu226, and His229 together coordinate Fe cation.

Belongs to the TmoA/XamoA family. In terms of assembly, the propane 2-monooxygenase multicomponent enzyme system is composed of an electron transfer component and a monooxygenase component interacting with the effector protein MimD. The electron transfer component is composed of a reductase (MimB), and the monooxygenase component is formed by a large subunit (MimA) and a small subunit (MimC). Requires the presence of the chaperonin-like protein MimG to ensure a productive folding, resulting of a soluble MimA, which leads to the active form of MimABCD. Fe(2+) is required as a cofactor.

It catalyses the reaction propane + NADH + O2 + H(+) = propan-2-ol + NAD(+) + H2O. The catalysed reaction is acetone + NADH + O2 + H(+) = hydroxyacetone + NAD(+) + H2O. The enzyme catalyses butan-2-one + NADH + O2 + H(+) = 1-hydroxy-2-butanone + NAD(+) + H2O. It carries out the reaction phenol + NADH + O2 + H(+) = hydroquinone + NAD(+) + H2O. Its function is as follows. Component of the propane 2-monooxygenase multicomponent enzyme system which is involved in the degradation of propane via the O2-dependent hydroxylation of propane. Also involved in the degradation of acetone via the O2-dependent hydroxylation of acetone. Also able to catalyze the oxidation of phenol, methylethylketone (2-butanone), 1-propanol and 2-propanol. This chain is Propane 2-monooxygenase, hydroxylase component large subunit, found in Mycolicibacterium goodii (Mycobacterium goodii).